Consider the following 278-residue polypeptide: Indole-3-glycerol phosphate synthase (278 aa).

This sequence belongs to the TrpC family.

It catalyses the reaction 1-(2-carboxyphenylamino)-1-deoxy-D-ribulose 5-phosphate + H(+) = (1S,2R)-1-C-(indol-3-yl)glycerol 3-phosphate + CO2 + H2O. Its pathway is amino-acid biosynthesis; L-tryptophan biosynthesis; L-tryptophan from chorismate: step 4/5. The protein is Indole-3-glycerol phosphate synthase of Pseudomonas fluorescens (strain Pf0-1).